Reading from the N-terminus, the 177-residue chain is O-acetyl-ADP-ribose deacetylase (177 aa).

The Macro domain occupies 1–175; sequence MKSRIHVQHG…LYERLLTQQG (175 aa). Residues 11–12, Asn-25, 33–35, and 122–126 contribute to the substrate site; these read DI, GVD, and STGAY. The Proton acceptor role is filled by Asp-35.

This sequence belongs to the MacroD-type family. YmdB subfamily. As to quaternary structure, homodimer. Interacts with RNase III.

It catalyses the reaction 3''-O-acetyl-ADP-D-ribose + H2O = ADP-D-ribose + acetate + H(+). It carries out the reaction 2''-O-acetyl-ADP-D-ribose + H2O = ADP-D-ribose + acetate + H(+). Deacetylates O-acetyl-ADP ribose to yield ADP-ribose and free acetate. Down-regulates ribonuclease 3 (RNase III) activity. Acts by interacting directly with the region of the ribonuclease that is required for dimerization/activation. This Citrobacter koseri (strain ATCC BAA-895 / CDC 4225-83 / SGSC4696) protein is O-acetyl-ADP-ribose deacetylase.